A 362-amino-acid chain; its full sequence is Porin Omp2b (362 aa).

Positions 1-22 (MNIKSLLLGSAAALVAASGAQA) are cleaved as a signal peptide.

Belongs to the alphaproteobacteria porin family. In terms of assembly, homotrimer.

The protein localises to the cell outer membrane. Functionally, forms passive diffusion pores that allow small molecular weight hydrophilic materials across the outer membrane. This Brucella canis (strain ATCC 23365 / NCTC 10854 / RM-666) protein is Porin Omp2b (omp2b).